The sequence spans 98 residues: Integration host factor subunit alpha (98 aa).

The protein belongs to the bacterial histone-like protein family. As to quaternary structure, heterodimer of an alpha and a beta chain.

Functionally, this protein is one of the two subunits of integration host factor, a specific DNA-binding protein that functions in genetic recombination as well as in transcriptional and translational control. The polypeptide is Integration host factor subunit alpha (Actinobacillus pleuropneumoniae serotype 5b (strain L20)).